A 26-amino-acid chain; its full sequence is Oxyopinin-3b (26 aa).

As to expression, expressed by the venom gland.

Its subcellular location is the secreted. Its function is as follows. May have cytolytic and antimicrobial activity. The chain is Oxyopinin-3b from Oxyopes takobius (Lynx spider).